The sequence spans 1401 residues: Kinesin-like protein KIF27 (1401 aa).

In terms of domain architecture, Kinesin motor spans 5–341; the sequence is PVKVAVRIRP…LKYANRARNI (337 aa). An ATP-binding site is contributed by 84–91; it reads GQTGSGKT. 2 coiled-coil regions span residues 352–413 and 489–557; these read ESDR…GYQC and LAAD…KLNL. Ser643, Ser646, Ser672, Ser675, and Ser704 each carry phosphoserine. A disordered region spans residues 643 to 662; that stretch reads SDNSDDEESEGQEKSGTRCR. Coiled coils occupy residues 705 to 886, 916 to 1070, 1118 to 1154, and 1190 to 1219; these read QELN…IQLK, DHLQ…AAIE, NKVV…LESA, and EGIM…TSRD. Ser999 carries the phosphoserine modification. Residues 1259–1280 are compositionally biased toward basic and acidic residues; sequence EELKWASRPESMKLSGREREMD. The interval 1259-1332 is disordered; sequence EELKWASRPE…TETDDNQFTK (74 aa). Residues 1281–1292 are compositionally biased toward polar residues; that stretch reads SSASSLRTQPNP. A phosphoserine mark is found at Ser1367 and Ser1389.

Belongs to the TRAFAC class myosin-kinesin ATPase superfamily. Kinesin family. KIF27 subfamily. Interacts with STK36. Testis, pancreatic islet, germ cell tumors and Jurkat T-cells.

Its subcellular location is the cytoplasm. It is found in the cytoskeleton. The protein resides in the cell projection. The protein localises to the cilium. Its function is as follows. Plays an essential role in motile ciliogenesis. This is Kinesin-like protein KIF27 (KIF27) from Homo sapiens (Human).